Reading from the N-terminus, the 98-residue chain is NADH-ubiquinone oxidoreductase chain 4L (98 aa).

Helical transmembrane passes span 1 to 21 (MTTI…GVLI), 26 to 46 (LLST…LMAL), and 59 to 79 (APLI…ALLV).

This sequence belongs to the complex I subunit 4L family. Core subunit of respiratory chain NADH dehydrogenase (Complex I) which is composed of 45 different subunits.

Its subcellular location is the mitochondrion inner membrane. It catalyses the reaction a ubiquinone + NADH + 5 H(+)(in) = a ubiquinol + NAD(+) + 4 H(+)(out). Core subunit of the mitochondrial membrane respiratory chain NADH dehydrogenase (Complex I) which catalyzes electron transfer from NADH through the respiratory chain, using ubiquinone as an electron acceptor. Part of the enzyme membrane arm which is embedded in the lipid bilayer and involved in proton translocation. In Rhyncholestes raphanurus (Chilean shrew opossum), this protein is NADH-ubiquinone oxidoreductase chain 4L (MT-ND4L).